The primary structure comprises 1585 residues: Adhesion G protein-coupled receptor B2 (1585 aa).

Positions 1-32 (MENTGWMGKGHRMTPACPLLLSVILSLRLATA) are cleaved as a signal peptide. The Extracellular portion of the chain corresponds to 33–936 (FDPAPSACSA…ELAGSPSVPL (904 aa)). N-linked (GlcNAc...) asparagine glycosylation is found at Asn-106, Asn-191, and Asn-192. Positions 229–238 (AGAGSTTTTS) are enriched in low complexity. The disordered stretch occupies residues 229–271 (AGAGSTTTTSPGPPAAHTLSNALVPGGPAPPAEADLHSGSSND). Ser-266 carries O-linked (Xyl...) (chondroitin sulfate) serine glycosylation. TSP type-1 domains follow at residues 309 to 362 (DPAA…ATCP), 364 to 417 (HGVW…AACP), 419 to 472 (EGQW…LECP), and 475 to 528 (DSKW…KRCP). Disulfide bonds link Cys-321–Cys-355, Cys-325–Cys-361, Cys-336–Cys-345, Cys-376–Cys-411, Cys-380–Cys-416, Cys-391–Cys-401, Cys-431–Cys-466, Cys-435–Cys-471, Cys-446–Cys-456, Cys-487–Cys-522, Cys-491–Cys-527, Cys-502–Cys-512, Cys-534–Cys-569, and Cys-557–Cys-587. N-linked (GlcNAc...) asparagine glycosylation occurs at Asn-356. N-linked (GlcNAc...) asparagine glycosylation is present at Asn-437. Asn-560 and Asn-645 each carry an N-linked (GlcNAc...) asparagine glycan. The region spanning 757 to 924 (DRLFLPKEVL…AVLAQPPKDL (168 aa)) is the GAIN-B domain. Residues 767 to 806 (SLSSPGKPATSGAAGSPGRGRGPGTVPPGPGHSHQRLLPA) form a disordered region. The span at 769-780 (SSPGKPATSGAA) shows a compositional bias: low complexity. Asn-867 carries an N-linked (GlcNAc...) asparagine glycan. Disulfide bonds link Cys-874/Cys-906 and Cys-894/Cys-908. The interval 874 to 924 (CASWDYSRADASSGDWDTENCQTLETQAAHTRCQCQHLSTFAVLAQPPKDL) is GPS. The helical transmembrane segment at 937 to 957 (VIGCAVSCMALLTLLAIYAAF) threads the bilayer. Residues 958–965 (WRFIKSER) lie on the Cytoplasmic side of the membrane. Residues 966–986 (SIILLNFCLSILASNILILVG) form a helical membrane-spanning segment. At 987 to 994 (QSRVLSKG) the chain is on the extracellular side. A helical membrane pass occupies residues 995 to 1015 (VCTMTAAFLHFFFLSSFCWVL). Topologically, residues 1016–1036 (TEAWQSYLAVIGRMRTRLVRK) are cytoplasmic. Residues 1037–1057 (RFLCLGWGLPALVVAVSVGFT) form a helical membrane-spanning segment. Over 1058–1078 (RTKGYGTSSYCWLSLEGGLLY) the chain is Extracellular. The chain crosses the membrane as a helical span at residues 1079 to 1099 (AFVGPAAVIVLVNMLIGIIVF). The Cytoplasmic segment spans residues 1100–1121 (NKLMARDGISDKSKKQRAGSER). The chain crosses the membrane as a helical span at residues 1122-1142 (CPWASLLLPCSACGAVPSPLL). Residues 1143 to 1153 (SSASARNAMAS) are Extracellular-facing. Residues 1154 to 1174 (LWSSCVVLPLLALTWMSAVLA) form a helical membrane-spanning segment. Over 1175-1585 (MTDRRSVLFQ…PPDGDFQTEV (411 aa)) the chain is Cytoplasmic. Tyr-1351 is modified (phosphotyrosine). Disordered stretches follow at residues 1359–1385 (LSLQ…PRRA), 1423–1454 (FQPP…GSTM), and 1498–1585 (YRSQ…QTEV). Residues 1372-1382 (DAPRARPEGTP) are compositionally biased toward basic and acidic residues. Residues 1543–1552 (SWSTFKSMTL) are compositionally biased toward polar residues. The span at 1575-1585 (EPPDGDFQTEV) shows a compositional bias: acidic residues.

This sequence belongs to the G-protein coupled receptor 2 family. Adhesion G-protein coupled receptor (ADGR) subfamily. Heterodimer of 2 chains generated by proteolytic processing; the large extracellular N-terminal fragment and the membrane-bound C-terminal fragment predominantly remain associated and non-covalently linked. Interacts with GABPB2. Interacts (via carboxy-terminus) with TAX1BP3. Interacts with GNAZ. Interacts with SH3GL2. Glycosylated. Post-translationally, autoproteolytically processed at the GPS region of the GAIN-B domain; this cleavage modulates receptor activity. Additionally, furin is involved in the cleavage at another site, in the middle of the extracellular domain, generating a soluble fragment. As to expression, detected in cerebrospinal fluid (at protein level). Strongly expressed in brain. Also detected in heart, thymus, skeletal muscle, and different cell lines.

The protein resides in the cell membrane. The protein localises to the secreted. With respect to regulation, receptor activity is regulated by proteolytic processing. The long N-terminal has a an inhibitory effect on the constitutive signaling activity. Removal of the N-terminal region induces an increase of the receptor activity. Its function is as follows. Orphan G-protein coupled receptor involved in cell adhesion and probably in cell-cell interactions. Activates NFAT-signaling pathway, a transcription factor, via the G-protein GNAZ. Involved in angiogenesis inhibition. The polypeptide is Adhesion G protein-coupled receptor B2 (Homo sapiens (Human)).